The chain runs to 548 residues: NAD(P)H-quinone oxidoreductase chain 4 (548 aa).

14 consecutive transmembrane segments (helical) span residues 17-37 (VPWLSLSILVPIGGALLIPFI), 48-68 (WYALIVTLITFLITVAAYLTG), 103-123 (LILLTSFITSLACLAAWPVTF), 127-147 (LFFFLLLAMDGGQIAVFAVQD), 149-169 (LLFFLAWELELLPVYLLLAIW), 181-201 (FILYTAGSSLFILLAALAMGF), 222-242 (GFQLLCYAGLLIAFGVKLPIV), 256-276 (TAPVHMLLAGILLKMGGYALL), 290-310 (FAPLLIVLGVVNIIYAALTSF), 327-347 (MGFVLIGIGSFSVLGSSGAML), 348-368 (QMISHGLIGASLFFLVGATYD), 389-409 (FALWTVCALASLALPGMSGFV), 430-450 (VVICGLAAVGVVLTPVYLLSM), and 477-497 (VYIIGCLLVPIIGIGLYPRLM).

This sequence belongs to the complex I subunit 4 family.

It is found in the cellular thylakoid membrane. It catalyses the reaction a plastoquinone + NADH + (n+1) H(+)(in) = a plastoquinol + NAD(+) + n H(+)(out). The catalysed reaction is a plastoquinone + NADPH + (n+1) H(+)(in) = a plastoquinol + NADP(+) + n H(+)(out). In terms of biological role, NDH-1 shuttles electrons from NAD(P)H, via FMN and iron-sulfur (Fe-S) centers, to quinones in the respiratory chain. The immediate electron acceptor for the enzyme in this species is believed to be plastoquinone. Couples the redox reaction to proton translocation (for every two electrons transferred, four hydrogen ions are translocated across the cytoplasmic membrane), and thus conserves the redox energy in a proton gradient. The protein is NAD(P)H-quinone oxidoreductase chain 4 of Synechococcus sp. (strain CC9902).